Here is a 275-residue protein sequence, read N- to C-terminus: MFEITRPPGVRAHVGVIGGSGLYDPGIVENPVEVKVSTPYGNPSDFIVVGDVAGVKVAFLPRHGRGHRIPPHAINYRANIWALKALGVKWVISVSAVGSLREDYRPGDFVVPDQFIDMTKNRRHYTFYDGPVTVHVSMADPFCEDLRQRLIDSGRRLGYTVHERGTYVCIEGPRFSTRAESRVWKDVFKADIIGMTLVPEINLACEAQLCYATLAMVTDYDVWADRPVTAEEVERVMISNVERARRMLYDVIPKLAGEPELERCSCCRALDTAAI.

Residues Ser-20, 62–63, and 95–96 contribute to the phosphate site; these read RH and SA. Cystine bridges form between Cys-143–Cys-210, Cys-205–Cys-266, and Cys-264–Cys-267. Met-195 contributes to the substrate binding site. Thr-196 lines the phosphate pocket. Substrate is bound at residue 219–221; that stretch reads DYD.

The protein belongs to the PNP/MTAP phosphorylase family. MTAP subfamily. As to quaternary structure, homohexamer. Dimer of a homotrimer.

The catalysed reaction is S-methyl-5'-thioadenosine + phosphate = 5-(methylsulfanyl)-alpha-D-ribose 1-phosphate + adenine. It participates in amino-acid biosynthesis; L-methionine biosynthesis via salvage pathway; S-methyl-5-thio-alpha-D-ribose 1-phosphate from S-methyl-5'-thioadenosine (phosphorylase route): step 1/1. Its function is as follows. Catalyzes the reversible phosphorylation of S-methyl-5'-thioadenosine (MTA) to adenine and 5-methylthioribose-1-phosphate. Involved in the breakdown of MTA, a major by-product of polyamine biosynthesis. Responsible for the first step in the methionine salvage pathway after MTA has been generated from S-adenosylmethionine. Has broad substrate specificity with 6-aminopurine nucleosides as preferred substrates. This Aeropyrum pernix (strain ATCC 700893 / DSM 11879 / JCM 9820 / NBRC 100138 / K1) protein is S-methyl-5'-thioadenosine phosphorylase.